The sequence spans 290 residues: Lipoyl synthase (290 aa).

[4Fe-4S] cluster contacts are provided by cysteine 38, cysteine 43, cysteine 49, cysteine 64, cysteine 68, cysteine 71, and serine 277. Residues 50–266 (WSKGTATFLL…REIALDAGFR (217 aa)) enclose the Radical SAM core domain.

This sequence belongs to the radical SAM superfamily. Lipoyl synthase family. It depends on [4Fe-4S] cluster as a cofactor.

Its subcellular location is the cytoplasm. It carries out the reaction [[Fe-S] cluster scaffold protein carrying a second [4Fe-4S](2+) cluster] + N(6)-octanoyl-L-lysyl-[protein] + 2 oxidized [2Fe-2S]-[ferredoxin] + 2 S-adenosyl-L-methionine + 4 H(+) = [[Fe-S] cluster scaffold protein] + N(6)-[(R)-dihydrolipoyl]-L-lysyl-[protein] + 4 Fe(3+) + 2 hydrogen sulfide + 2 5'-deoxyadenosine + 2 L-methionine + 2 reduced [2Fe-2S]-[ferredoxin]. It participates in protein modification; protein lipoylation via endogenous pathway; protein N(6)-(lipoyl)lysine from octanoyl-[acyl-carrier-protein]: step 2/2. In terms of biological role, catalyzes the radical-mediated insertion of two sulfur atoms into the C-6 and C-8 positions of the octanoyl moiety bound to the lipoyl domains of lipoate-dependent enzymes, thereby converting the octanoylated domains into lipoylated derivatives. The polypeptide is Lipoyl synthase (Chlorobaculum tepidum (strain ATCC 49652 / DSM 12025 / NBRC 103806 / TLS) (Chlorobium tepidum)).